We begin with the raw amino-acid sequence, 444 residues long: Orexin receptor type 2 (444 aa).

A compositionally biased stretch (basic and acidic residues) spans 1–10 (MSGTKLEDSP). The segment at 1 to 30 (MSGTKLEDSPPCRNWSSAPELNETQEPFLN) is disordered. Over 1-54 (MSGTKLEDSPPCRNWSSAPELNETQEPFLNPTDYDDEEFLRYLWREYLHPKEYE) the chain is Extracellular. Residues N14 and N22 are each glycosylated (N-linked (GlcNAc...) asparagine). Polar residues predominate over residues 14–27 (NWSSAPELNETQEP). The required for response to orexin-A stretch occupies residues 33–49 (DYDDEEFLRYLWREYLH). The helical transmembrane segment at 55-75 (WVLIAGYIIVFVVALIGNVLV) threads the bilayer. Residues 76 to 88 (CVAVWKNHHMRTV) are Cytoplasmic-facing. Residues 89 to 110 (TNYFIVNLSLADVLVTITCLPA) traverse the membrane as a helical segment. At 111 to 127 (TLVVDITETWFFGQSLC) the chain is on the extracellular side. An intrachain disulfide couples C127 to C210. The helical transmembrane segment at 128–150 (KVIPYLQTVSVSVSVLTLSCIAL) threads the bilayer. Over 151–170 (DRWYAICHPLMFKSTAKRAR) the chain is Cytoplasmic. The chain crosses the membrane as a helical span at residues 171–191 (NSIVIIWIVSCIIMIPQAIVM). The Extracellular segment spans residues 192–222 (ECSTMLPGLANKTTLFTVCDERWGGEIYPKM). N202 carries an N-linked (GlcNAc...) asparagine glycan. A helical transmembrane segment spans residues 223-243 (YHICFFLVTYMAPLCLMVLAY). The Cytoplasmic segment spans residues 244–304 (LQIFRKLWCR…QIRARRKTAR (61 aa)). Residues 305–326 (MLMVVLLVFAICYLPISILNVL) form a helical membrane-spanning segment. Residues 327-342 (KRVFGMFTHTEDRETV) lie on the Extracellular side of the membrane. A helical membrane pass occupies residues 343-366 (YAWFTFSHWLVYANSAANPIIYNF). The Cytoplasmic portion of the chain corresponds to 367–444 (LSGKFREEFK…ANGAGQLQNW (78 aa)).

This sequence belongs to the G-protein coupled receptor 1 family.

It localises to the cell membrane. Its function is as follows. Nonselective, high-affinity receptor for both orexin-A and orexin-B neuropeptides. Triggers an increase in cytoplasmic Ca(2+) levels in response to orexin-A binding. In Sus scrofa (Pig), this protein is Orexin receptor type 2 (HCRTR2).